A 94-amino-acid chain; its full sequence is DNA-binding protein HU (94 aa).

The tract at residues 56 to 94 (QKGKEGKVPGSDKTYKTEDKRVPKFKPGKTLKQKVEEGK) is disordered. Residues 68 to 77 (KTYKTEDKRV) are compositionally biased toward basic and acidic residues. A compositionally biased stretch (basic residues) spans 78–87 (PKFKPGKTLK).

The protein belongs to the bacterial histone-like protein family. Homodimer.

Histone-like DNA-binding protein which is capable of wrapping DNA to stabilize it, and thus to prevent its denaturation under extreme environmental conditions. The polypeptide is DNA-binding protein HU (hup) (Helicobacter pylori (strain ATCC 700392 / 26695) (Campylobacter pylori)).